Here is a 256-residue protein sequence, read N- to C-terminus: Ribosomal RNA small subunit methyltransferase A (256 aa).

Positions 12, 14, 39, 60, 85, and 103 each coordinate S-adenosyl-L-methionine.

Belongs to the class I-like SAM-binding methyltransferase superfamily. rRNA adenine N(6)-methyltransferase family. RsmA subfamily.

Its subcellular location is the cytoplasm. It carries out the reaction adenosine(1518)/adenosine(1519) in 16S rRNA + 4 S-adenosyl-L-methionine = N(6)-dimethyladenosine(1518)/N(6)-dimethyladenosine(1519) in 16S rRNA + 4 S-adenosyl-L-homocysteine + 4 H(+). In terms of biological role, specifically dimethylates two adjacent adenosines (A1518 and A1519) in the loop of a conserved hairpin near the 3'-end of 16S rRNA in the 30S particle. May play a critical role in biogenesis of 30S subunits. The chain is Ribosomal RNA small subunit methyltransferase A from Legionella pneumophila subsp. pneumophila (strain Philadelphia 1 / ATCC 33152 / DSM 7513).